The sequence spans 230 residues: Fibrillarin-like rRNA/tRNA 2'-O-methyltransferase (230 aa).

S-adenosyl-L-methionine contacts are provided by residues 87-88 (TT), 105-106 (EF), 130-131 (DA), and 150-153 (DVAQ).

Belongs to the methyltransferase superfamily. Fibrillarin family. In terms of assembly, interacts with nop5. Component of box C/D small ribonucleoprotein (sRNP) particles that contain rpl7ae, FlpA and nop5, plus a guide RNA.

Functionally, involved in pre-rRNA and tRNA processing. Utilizes the methyl donor S-adenosyl-L-methionine to catalyze the site-specific 2'-hydroxyl methylation of ribose moieties in rRNA and tRNA. Site specificity is provided by a guide RNA that base pairs with the substrate. Methylation occurs at a characteristic distance from the sequence involved in base pairing with the guide RNA. In Methanococcus maripaludis (strain C6 / ATCC BAA-1332), this protein is Fibrillarin-like rRNA/tRNA 2'-O-methyltransferase.